The chain runs to 273 residues: Undecaprenyl-diphosphatase (273 aa).

Transmembrane regions (helical) follow at residues 43–63 (IGNV…CWEY), 82–102 (KFVL…VLLI), 109–129 (LFNP…ILWA), 185–205 (TEFS…YDVL), 214–234 (ADLP…FVAV), and 249–269 (FAWY…LGWI).

This sequence belongs to the UppP family.

It localises to the cell inner membrane. It catalyses the reaction di-trans,octa-cis-undecaprenyl diphosphate + H2O = di-trans,octa-cis-undecaprenyl phosphate + phosphate + H(+). Catalyzes the dephosphorylation of undecaprenyl diphosphate (UPP). Confers resistance to bacitracin. This chain is Undecaprenyl-diphosphatase, found in Laribacter hongkongensis (strain HLHK9).